The primary structure comprises 501 residues: Proline--tRNA ligase (501 aa).

Belongs to the class-II aminoacyl-tRNA synthetase family. ProS type 3 subfamily. Homodimer.

It localises to the cytoplasm. It catalyses the reaction tRNA(Pro) + L-proline + ATP = L-prolyl-tRNA(Pro) + AMP + diphosphate. Its function is as follows. Catalyzes the attachment of proline to tRNA(Pro) in a two-step reaction: proline is first activated by ATP to form Pro-AMP and then transferred to the acceptor end of tRNA(Pro). The polypeptide is Proline--tRNA ligase (Halobacterium salinarum (strain ATCC 29341 / DSM 671 / R1)).